We begin with the raw amino-acid sequence, 602 residues long: Glutathione-regulated potassium-efflux system protein KefB (602 aa).

The next 13 helical transmembrane spans lie at 4 to 24 (TGLL…VPIA), 29 to 49 (IGAV…GLGF), 55 to 75 (EILH…GLEL), 87 to 107 (IFGV…ALLY), 115 to 135 (AAVI…LQLM), 152 to 172 (VLLF…ILAG), 181 to 201 (VKIG…RYLL), 207 to 227 (YIVA…VVLG), 230 to 250 (LFMD…GILL), 261 to 281 (IAIE…VGMA), 296 to 318 (LGVL…VFGL), 326 to 346 (FAGV…AAFS), and 356 to 376 (ALLL…MQVI). One can recognise an RCK N-terminal domain in the interval 400-519 (DPQVIIVGFG…NGVKDFTRET (120 aa)).

The protein belongs to the monovalent cation:proton antiporter 2 (CPA2) transporter (TC 2.A.37) family. KefB subfamily. In terms of assembly, interacts with the regulatory subunit KefG.

The protein resides in the cell inner membrane. Functionally, pore-forming subunit of a potassium efflux system that confers protection against electrophiles. Catalyzes K(+)/H(+) antiport. In Yersinia pestis bv. Antiqua (strain Antiqua), this protein is Glutathione-regulated potassium-efflux system protein KefB.